A 500-amino-acid polypeptide reads, in one-letter code: Putative antiporter subunit mnhD2 (500 aa).

14 helical membrane-spanning segments follow: residues M2–F22, I32–V52, L78–F98, F108–S128, L130–L150, I161–L181, I209–L229, L240–F260, T273–Y293, I308–F328, L330–M350, F368–G388, G403–F423, and G450–L470.

The protein belongs to the CPA3 antiporters (TC 2.A.63) subunit D family. In terms of assembly, may form a heterooligomeric complex that consists of seven subunits: mnhA2, mnhB2, mnhC2, mnhD2, mnhE2, mnhF2 and mnhG2.

It is found in the cell membrane. The protein is Putative antiporter subunit mnhD2 (mnhD2) of Staphylococcus epidermidis (strain ATCC 12228 / FDA PCI 1200).